Here is a 287-residue protein sequence, read N- to C-terminus: Short-chain dehydrogenase virD (287 aa).

NADP(+)-binding residues include Val10, Thr36, Asp57, Asn85, Tyr149, Lys153, Val182, and Thr184. The Proton acceptor role is filled by Tyr149. Lys153 (lowers pKa of active site Tyr) is an active-site residue.

This sequence belongs to the short-chain dehydrogenases/reductases (SDR) family.

It participates in secondary metabolite biosynthesis. Its function is as follows. Short-chain dehydrogenase; part of the gene cluster that mediates the biosynthesis of virensols and trichoxide, fungal natural products that contain or are derived from a salicylaldehyde core. The pathway begins with the synthesis of the reduced chain in virensol C by the highly reducing polyketide synthase virA via condensation of one acetate and 8 malonate units. VirA has interesting programming rules since the first 2 ketides are fully reduced, the 3 following ketides undergo beta-dehydration, and the last 3 ketides are only reduced to beta-hydroxys to yield the trihydroxy portion. The production of aldehyde virensol C by virA alone is surprising, since virA does not contain a reductase (R) domain that is typically associated with reductive product release in HRPKS. The cupin-domain enzyme virC is involved in enhancing virA product turnover. The short-chain dehydrogenase virB then oxidizes the C-7 alcohol of virensol C to a ketone, yielding virensol D. Virensol D is further transformed to salicylaldehyde 5-deoxyaurocitrin by the short-chain dehydrogenase virD. VirD catalyzes the dehydrogenation of C-3 to form the beta-ketone aldehyde, which is followed by the generation of the nucleophilic C-2 that is required for the intramolecular aldol condensation between C-2 and C-7, itself followed by dehydration and aromatization which leads to salicylaldehyde 5-deoxyaurocitrin. While the dehydrogenation of virensol D is definitely catalyzed by virD, the aldol condensation and dehydration may be uncatalyzed or assisted by virD. The short chain dehydrogenase virG then converts salicylaldehyde 5-deoxyaurocitrin into virensol B which is further hydroxylated by the cytochrome P450 monooxygenase virE to yield the hydroquinone virensol A. VirI then may oxidize virensol A to form the quinone, while virH performs the epoxidation. Finally, the two remaining short-chain dehydrogenases, virK and virL, are probably responsible for reducing the ketones to the corresponding alcohols to furnish the epoxycyclohexanol structure in trichoxide. This chain is Short-chain dehydrogenase virD, found in Hypocrea virens (strain Gv29-8 / FGSC 10586) (Gliocladium virens).